Consider the following 248-residue polypeptide: 3-deoxy-manno-octulosonate cytidylyltransferase (248 aa).

It belongs to the KdsB family.

Its subcellular location is the cytoplasm. It carries out the reaction 3-deoxy-alpha-D-manno-oct-2-ulosonate + CTP = CMP-3-deoxy-beta-D-manno-octulosonate + diphosphate. It functions in the pathway nucleotide-sugar biosynthesis; CMP-3-deoxy-D-manno-octulosonate biosynthesis; CMP-3-deoxy-D-manno-octulosonate from 3-deoxy-D-manno-octulosonate and CTP: step 1/1. The protein operates within bacterial outer membrane biogenesis; lipopolysaccharide biosynthesis. Activates KDO (a required 8-carbon sugar) for incorporation into bacterial lipopolysaccharide in Gram-negative bacteria. This is 3-deoxy-manno-octulosonate cytidylyltransferase from Salmonella dublin (strain CT_02021853).